A 745-amino-acid chain; its full sequence is Junction plakoglobin (745 aa).

An N-acetylmethionine modification is found at M1. T14 is a glycosylation site (O-linked (GlcNAc) threonine). Residues S99 and S125 each carry the phosphoserine modification. ARM repeat units follow at residues N132–K171, K172–H215, R216–L255, E258–Y297, G298–C341, P342–D381, A383–C420, S423–S464, E470–L510, P512–T551, P574–Q613, and K615–R661. An interaction with DSC1 and DSG1 region spans residues N132 to Y297. Residue S182 is modified to Phosphoserine. The tract at residues P574–R661 is interaction with DSC1. Phosphoserine is present on residues S665 and S730.

It belongs to the beta-catenin family. Homodimer. Component of an E-cadherin/catenin adhesion complex composed of at least E-cadherin/CDH1 and gamma-catenin/JUP, and possibly alpha-catenin/CTNNA1; the complex is located to adherens junctions. The stable association of CTNNA1 is controversial as CTNNA1 was shown not to bind to F-actin when assembled in the complex. Interacts with MUC1. Interacts with CAV1. Interacts with PTPRJ. Interacts with DSG1. Interacts with DSC1 and DSC2. Interacts with PKP2. Interacts with PKP3 (via N-terminus); the interaction is required for PKP3 localization to desmosome cell-cell junctions. Interacts with DSG4. In terms of processing, may be phosphorylated by FER. In terms of tissue distribution, expressed in the heart (at protein level).

It is found in the cell junction. Its subcellular location is the adherens junction. The protein resides in the desmosome. The protein localises to the cytoplasm. It localises to the cytoskeleton. It is found in the cell membrane. Its subcellular location is the nucleus. Functionally, common junctional plaque protein. The membrane-associated plaques are architectural elements in an important strategic position to influence the arrangement and function of both the cytoskeleton and the cells within the tissue. The presence of plakoglobin in both the desmosomes and in the intermediate junctions suggests that it plays a central role in the structure and function of submembranous plaques. Acts as a substrate for VE-PTP and is required by it to stimulate VE-cadherin function in endothelial cells. Can replace beta-catenin in E-cadherin/catenin adhesion complexes which are proposed to couple cadherins to the actin cytoskeleton. In Homo sapiens (Human), this protein is Junction plakoglobin.